A 452-amino-acid chain; its full sequence is Coiled-coil domain-containing protein 71 (452 aa).

The segment at 81–106 is disordered; it reads PSQTKLQARAPTPAATSPPASAPQTA. The span at 87–106 shows a compositional bias: low complexity; it reads QARAPTPAATSPPASAPQTA. Residue S129 is modified to Phosphoserine. 2 disordered regions span residues 209 to 256 and 322 to 404; these read PLKV…GLQS and AREV…LGPG. Positions 279–344 form a coiled coil; the sequence is KAAQAKAACA…QAKAKVARTQ (66 aa). Over residues 332–344 the composition is skewed to low complexity; sequence KAVQAKAKVARTQ. Residues 377–386 are compositionally biased toward basic and acidic residues; that stretch reads RTEEAKDLSP.

The sequence is that of Coiled-coil domain-containing protein 71 (CCDC71) from Bos taurus (Bovine).